A 444-amino-acid polypeptide reads, in one-letter code: MNAPTKDQSLRNLQKGGELCGKVKVPGDKSISHRALLFGAIAKGKTLIEGLLPAEDPLSTAECLRSMGVKISPIKKGDIIEIEGVGLNGLQEPQDILNCGNSGTTMRLIMGLLAGQKDHHFILTGDKSLRNRPMKRVGQPLKMMGAKVFGRCGGNLAPLSIIGNKLRGAVIGTPVASAQIKSAILLAALNAEGSTTVIEPARSRDHSERMLKAFGANLEVGGEMGRHITVSPGKDLKGQSIIVPGDISSAAFWLIAGSIIPGSELVVENVGLNPTRTGILDVLEEMEANINVINKRDVAGEPVGDIEVFYKENLKPFKIDGEIMPRLVDEIPILSVGACFCNGISQIKGASELRVKETDRLAVMARQLKRMGASVDEHQDGLTIYGGKSLEGCELDSEDDHRIAMSLAIASIMANSNSTLRRSEAAAISYPDFWSDLKRLQQKN.

Residues Lys-29, Ser-30, and Arg-34 each coordinate 3-phosphoshikimate. Lys-29 lines the phosphoenolpyruvate pocket. Residues Gly-103 and Arg-132 each contribute to the phosphoenolpyruvate site. 3-phosphoshikimate is bound by residues Ser-177, Gln-179, Asp-329, and Lys-356. Residue Gln-179 coordinates phosphoenolpyruvate. Catalysis depends on Asp-329, which acts as the Proton acceptor. The phosphoenolpyruvate site is built by Arg-360 and Arg-402.

This sequence belongs to the EPSP synthase family. As to quaternary structure, monomer.

The protein localises to the cytoplasm. It carries out the reaction 3-phosphoshikimate + phosphoenolpyruvate = 5-O-(1-carboxyvinyl)-3-phosphoshikimate + phosphate. The protein operates within metabolic intermediate biosynthesis; chorismate biosynthesis; chorismate from D-erythrose 4-phosphate and phosphoenolpyruvate: step 6/7. Functionally, catalyzes the transfer of the enolpyruvyl moiety of phosphoenolpyruvate (PEP) to the 5-hydroxyl of shikimate-3-phosphate (S3P) to produce enolpyruvyl shikimate-3-phosphate and inorganic phosphate. The sequence is that of 3-phosphoshikimate 1-carboxyvinyltransferase from Prochlorococcus marinus (strain NATL2A).